The sequence spans 137 residues: DNA-binding protein H-NS (137 aa).

The DNA-binding element occupies 112 to 117; it reads QGRTPA.

Belongs to the histone-like protein H-NS family. In terms of assembly, homodimer that oligomerizes on DNA into higher-order complexes that form bridges between disparate regions of DNA compacting it. Interacts with Hha, Cnu and StpA.

It is found in the cytoplasm. It localises to the nucleoid. In terms of biological role, a DNA-binding protein implicated in transcriptional repression and chromosome organization and compaction. Binds nucleation sites in AT-rich DNA and bridges them, forming higher-order nucleoprotein complexes and condensing the chromosome. As many horizontally transferred genes are AT-rich, it plays a central role in silencing foreign genes. A subset of genes are repressed by H-NS in association with other proteins. The polypeptide is DNA-binding protein H-NS (hns) (Escherichia coli O6:H1 (strain CFT073 / ATCC 700928 / UPEC)).